A 151-amino-acid chain; its full sequence is Endoribonuclease YbeY (151 aa).

Histidine 113, histidine 117, and histidine 123 together coordinate Zn(2+).

It belongs to the endoribonuclease YbeY family. Zn(2+) is required as a cofactor.

The protein resides in the cytoplasm. Its function is as follows. Single strand-specific metallo-endoribonuclease involved in late-stage 70S ribosome quality control and in maturation of the 3' terminus of the 16S rRNA. The protein is Endoribonuclease YbeY of Polaromonas naphthalenivorans (strain CJ2).